The sequence spans 168 residues: Pathogenesis-related protein 1A (168 aa).

The first 30 residues, 1-30, serve as a signal peptide directing secretion; it reads MGFVLFSQLPSFLLVSTLLLFLVISHSCRA. Positions 38-156 constitute an SCP domain; the sequence is LDAHNTARAD…NGGYVVSCNY (119 aa).

It belongs to the CRISP family. Three disulfide bonds are present.

Its subcellular location is the vacuole. Probably involved in the defense reaction of plants against pathogens. In Nicotiana tabacum (Common tobacco), this protein is Pathogenesis-related protein 1A.